The following is a 451-amino-acid chain: Secreted RxLR effector protein 70 (451 aa).

The N-terminal stretch at Met1–Ser17 is a signal peptide. The short motif at Arg48–Arg65 is the RxLR-dEER element. Positions Asp303–Phe336 are disordered. Polar residues predominate over residues Pro305–Thr323.

This sequence belongs to the RxLR effector family.

The protein localises to the secreted. It localises to the host nucleus. Secreted effector that completely suppresses the host cell death induced by cell death-inducing proteins. This chain is Secreted RxLR effector protein 70, found in Plasmopara viticola (Downy mildew of grapevine).